We begin with the raw amino-acid sequence, 207 residues long: Small ribosomal subunit protein uS4 (207 aa).

A disordered region spans residues 30–53; it reads DKSKFDTKPGQHGRTSGQRTSDFG. A compositionally biased stretch (polar residues) spans 42–52; sequence GRTSGQRTSDF. An S4 RNA-binding domain is found at 97–157; the sequence is SRLDNVVYRM…EKSKKQARIV (61 aa).

This sequence belongs to the universal ribosomal protein uS4 family. As to quaternary structure, part of the 30S ribosomal subunit. Contacts protein S5. The interaction surface between S4 and S5 is involved in control of translational fidelity.

One of the primary rRNA binding proteins, it binds directly to 16S rRNA where it nucleates assembly of the body of the 30S subunit. Its function is as follows. With S5 and S12 plays an important role in translational accuracy. In Delftia acidovorans (strain DSM 14801 / SPH-1), this protein is Small ribosomal subunit protein uS4.